A 1229-amino-acid chain; its full sequence is ABC transporter B family member 22 (1229 aa).

A run of 6 helical transmembrane segments spans residues 22–42 (MGLGLIGAVGDGFITPIIFFI), 69–89 (VALLYVAGASLVICFVEGYCW), 145–167 (LPNFLMSASAFVASYIVGFIMLW), 171–193 (IVGFPFFILLLIPGLMCGRALIN), 251–271 (GIAIGSNGVTYAIWGFMTWYG), and 274–294 (MVMYHGAKGGTIFAVIICITY). One can recognise an ABC transmembrane type-1 1 domain in the interval 22–311 (MGLGLIGAVG…GLSNLKYFSE (290 aa)). One can recognise an ABC transporter 1 domain in the interval 346–582 (VQFKHVKFMY…VDGQYTSLVR (237 aa)). Residue 381–388 (GGSGSGKS) coordinates ATP. 2 N-linked (GlcNAc...) asparagine glycosylation sites follow: Asn529 and Asn594. 2 helical membrane passes run 661-681 (ALYGCLSAVLYGALHPIYAYA) and 703-723 (IYVLLFVGLAVLCFLISIIQQ). In terms of domain architecture, ABC transmembrane type-1 2 spans 661–949 (ALYGCLSAVL…AGAMTMDLAK (289 aa)). An N-linked (GlcNAc...) asparagine glycan is attached at Asn758. Transmembrane regions (helical) follow at residues 782–800 (VSLLVQTISAVSVACTLGL), 807–823 (SIVMIAIQPVVVGCFYT), 885–908 (WLAGIVLATSRSLMTCTSALNYWY), and 923–943 (FFELFILFVSTGRVIADAGAM). The 239-residue stretch at 984–1222 (IKFVNVDFAY…GPTGVYFSLV (239 aa)) folds into the ABC transporter 2 domain. An N-linked (GlcNAc...) asparagine glycan is attached at Asn1004. 1019 to 1026 (GPSGSGKS) serves as a coordination point for ATP. A glycan (N-linked (GlcNAc...) asparagine) is linked at Asn1157.

The protein belongs to the ABC transporter superfamily. ABCB family. Multidrug resistance exporter (TC 3.A.1.201) subfamily.

It is found in the membrane. In Arabidopsis thaliana (Mouse-ear cress), this protein is ABC transporter B family member 22 (ABCB22).